The primary structure comprises 295 residues: Proline-rich protein 18 (295 aa).

Residues 1–13 (MPFPPMPPPPAPA) show a composition bias toward pro residues. Residues 1-133 (MPFPPMPPPP…GAGPCPDSAA (133 aa)) form a disordered region. Residues 14-29 (PGAQAARQLPRRPCAA) are compositionally biased toward low complexity. Residue S47 is modified to Phosphoserine. Residue R83 is modified to Omega-N-methylarginine. Positions 103-126 (ARTTYAATSAGTGTTAAGTSSGAG) are enriched in low complexity. Position 172 is an asymmetric dimethylarginine (R172). Low complexity predominate over residues 181–192 (ARAAGPRRGGPA). Residues 181–227 (ARAAGPRRGGPASDPDAPPTAGQGRRAPPPGAQLLHGGLQVPQLSPR) form a disordered region. The residue at position 188 (R188) is an Omega-N-methylarginine.

The polypeptide is Proline-rich protein 18 (PRR18) (Homo sapiens (Human)).